Here is a 91-residue protein sequence, read N- to C-terminus: Acyl-CoA-binding domain-containing protein 2 (91 aa).

Residues 3–88 (LQEEFEEFAE…VKQLLEEASA (86 aa)) enclose the ACB domain. An acyl-CoA-binding positions include Lys-15, 30 to 34 (YGLYK), Lys-52, Lys-56, and Tyr-75.

The protein belongs to the ACBP family. In terms of tissue distribution, highly expressed in leaves. Expressed at low levels in roots and seeds.

The protein resides in the cytoplasm. It localises to the cytosol. Binds medium- and long-chain acyl-CoA esters with high affinity. Can interact in vitro with linolenoyl-CoA. Binds palmitoyl-CoA and linoleoyl-CoA in vitro. Binds phosphatidic acid (PA) and phosphatidylcholine (PC) in vitro. May play a role in the biosynthesis of phospholipids. The sequence is that of Acyl-CoA-binding domain-containing protein 2 from Oryza sativa subsp. japonica (Rice).